The primary structure comprises 482 residues: MFS-type transporter traF (482 aa).

The segment covering 1–14 (MTSGTEQATLNTEE) has biased composition (polar residues). Positions 1 to 22 (MTSGTEQATLNTEENGSDSDHL) are disordered. Asn-15 and Asn-45 each carry an N-linked (GlcNAc...) asparagine glycan. A run of 9 helical transmembrane segments spans residues 52-72 (VFIT…SSVM), 89-109 (LSIL…LLFG), 125-145 (VFLF…ATIF), 149-169 (FLCG…LADL), 176-196 (GIAV…GPLV), 209-229 (WTQW…FVFC), 275-295 (PILA…YLCF), 312-332 (IGSL…VIII), and 354-374 (LVPM…FAWT). An N-linked (GlcNAc...) asparagine glycan is attached at Asn-376. The next 3 membrane-spanning stretches (helical) occupy residues 379-399 (LPWA…LLIF), 427-447 (LLGA…GVPW), and 448-468 (AMSL…LFFI).

This sequence belongs to the major facilitator superfamily. CAR1 family.

The protein localises to the membrane. MFS-type transporter; part of the tra gene cluster that produces terrestric acid. The clavatol biosynthesis cluster cla and the terrestric acid cluster tra are both involved in the production of peniphenones and penilactones. The chain is MFS-type transporter traF from Penicillium crustosum (Blue mold fungus).